A 679-amino-acid chain; its full sequence is Protein hook (679 aa).

The 118-residue stretch at 6 to 123 folds into the Calponin-homology (CH) domain; the sequence is NEMYYSLLEW…RLLQLVLGCA (118 aa). Coiled coils occupy residues 135-437 and 480-574; these read EIMC…LKCG and QTAL…QEIL.

The protein belongs to the hook family. As to quaternary structure, homodimer. Interacts with microtubules via its N-terminus.

The protein localises to the cytoplasm. The protein resides in the cytoskeleton. It is found in the endosome. It localises to the synapse. In terms of biological role, involved in endocytic trafficking by stabilizing organelles of the endocytic pathway. Probably acts as a cytoskeletal linker protein required to tether endosome vesicles to the cytoskeleton. Involved in modulation of endocytosis at stages required for down-regulation of membrane proteins that control synapse size. Not involved in synaptic vesicle recycling. Required in R7 cells for boss endocytosis into multivesicular bodies (MVBs). Has a role in regulating adult longevity. The polypeptide is Protein hook (Drosophila yakuba (Fruit fly)).